Here is a 450-residue protein sequence, read N- to C-terminus: UDP-N-acetylmuramoylalanine--D-glutamate ligase (450 aa).

119–125 (GSNGKTT) provides a ligand contact to ATP.

The protein belongs to the MurCDEF family.

The protein resides in the cytoplasm. The catalysed reaction is UDP-N-acetyl-alpha-D-muramoyl-L-alanine + D-glutamate + ATP = UDP-N-acetyl-alpha-D-muramoyl-L-alanyl-D-glutamate + ADP + phosphate + H(+). It functions in the pathway cell wall biogenesis; peptidoglycan biosynthesis. Its function is as follows. Cell wall formation. Catalyzes the addition of glutamate to the nucleotide precursor UDP-N-acetylmuramoyl-L-alanine (UMA). The sequence is that of UDP-N-acetylmuramoylalanine--D-glutamate ligase from Streptococcus sanguinis (strain SK36).